Reading from the N-terminus, the 462-residue chain is L-seryl-tRNA(Sec) selenium transferase (462 aa).

The residue at position 294 (K294) is an N6-(pyridoxal phosphate)lysine.

It belongs to the SelA family. Homodecamer; pentamer of dimers. Binds only one seryl-tRNA(Sec) per dimer. Requires pyridoxal 5'-phosphate as cofactor.

The protein localises to the cytoplasm. The enzyme catalyses L-seryl-tRNA(Sec) + selenophosphate + H(+) = L-selenocysteinyl-tRNA(Sec) + phosphate. Its pathway is aminoacyl-tRNA biosynthesis; selenocysteinyl-tRNA(Sec) biosynthesis; selenocysteinyl-tRNA(Sec) from L-seryl-tRNA(Sec) (bacterial route): step 1/1. Functionally, converts seryl-tRNA(Sec) to selenocysteinyl-tRNA(Sec) required for selenoprotein biosynthesis. This Yersinia pseudotuberculosis serotype O:1b (strain IP 31758) protein is L-seryl-tRNA(Sec) selenium transferase.